A 488-amino-acid chain; its full sequence is Probable malate:quinone oxidoreductase (488 aa).

Belongs to the MQO family. The cofactor is FAD.

The enzyme catalyses (S)-malate + a quinone = a quinol + oxaloacetate. It functions in the pathway carbohydrate metabolism; tricarboxylic acid cycle; oxaloacetate from (S)-malate (quinone route): step 1/1. The protein is Probable malate:quinone oxidoreductase of Neisseria meningitidis serogroup C / serotype 2a (strain ATCC 700532 / DSM 15464 / FAM18).